The chain runs to 879 residues: Prostaglandin F2 receptor negative regulator (879 aa).

Positions 1–21 (MGRPAPRPLLLALLSLAVCRG) are cleaved as a signal peptide. Ig-like C2-type domains are found at residues 22–137 (RVVR…DTVQ) and 149–263 (PSSR…QEIQ). The Extracellular portion of the chain corresponds to 22–832 (RVVRVPAGTL…MDVLNAFKYP (811 aa)). 2 disulfide bridges follow: C43–C119 and C169–C247. N44 is a glycosylation site (N-linked (GlcNAc...) asparagine). Residues 89 to 91 (RGD) carry the Cell attachment site motif. Residue T271 is modified to Phosphothreonine. Ig-like C2-type domains lie at 276–389 (PTAL…WHKV), 406–536 (PEYQ…DVFS), 544–662 (ASED…AWSP), and 688–813 (PTFN…AEIH). C299 and C373 are disulfide-bonded. N-linked (GlcNAc...) asparagine glycans are attached at residues N300, N383, and N413. An Endoplasmic reticulum retention signal motif is present at residues 424–427 (PTEL). Residues C429 and C515 are joined by a disulfide bond. N-linked (GlcNAc...) asparagine glycosylation is found at N525, N600, N618, and N691. A disulfide bridge links C571 with C655. The Cell attachment site signature appears at 703 to 705 (RGD). A disulfide bridge connects residues C711 and C793. Residues 833–853 (LLIGVGLSTVIGLLSCLIGYC) form a helical membrane-spanning segment. The Cytoplasmic portion of the chain corresponds to 854 to 879 (SSHWCCKKEVRETRRERRRLMSMEMD).

As to quaternary structure, interacts with CD9 and CD81. Part of a complex composed of CD9, CD81 and IGSF8. Also seems to interact with CD63, CD82 and CD151. As to expression, expressed in myoblasts (at protein level).

It localises to the endoplasmic reticulum membrane. The protein resides in the golgi apparatus. Its subcellular location is the trans-Golgi network membrane. Inhibits the binding of prostaglandin F2-alpha (PGF2-alpha) to its specific FP receptor, by decreasing the receptor number rather than the affinity constant. Functional coupling with the prostaglandin F2-alpha receptor seems to occur. In myoblasts, associates with tetraspanins CD9 and CD81 to prevent myotube fusion during muscle regeneration. This Mus musculus (Mouse) protein is Prostaglandin F2 receptor negative regulator (Ptgfrn).